The chain runs to 429 residues: Histidine--tRNA ligase (429 aa).

This sequence belongs to the class-II aminoacyl-tRNA synthetase family. Homodimer.

The protein localises to the cytoplasm. It carries out the reaction tRNA(His) + L-histidine + ATP = L-histidyl-tRNA(His) + AMP + diphosphate + H(+). This chain is Histidine--tRNA ligase, found in Pseudomonas aeruginosa (strain LESB58).